We begin with the raw amino-acid sequence, 325 residues long: MPEYQNIFTTVQVRAPAYPGVPLPKGSLPRIGKPIFSYWAGKIGDAQIGPIYLGFTGTLSIIFGFMAIFIIGFNMLASVDWNIIQFVKHFFWLGLEPPAPQYGLTIPPLSEGGWWLMAGFFLTMSILLWWVRTYKRAEALGMSQHLSWAFAAAIFFYLSLGFIRPVMMGSWAEAVPFGIFPHLDWTAAFSIRYGNLYYNPFHMLSIAFLYGSALLFAMHGATILAVSRFGGDREIDQITDRGTAAERAAIFWRWTMGFNASMESIHRWAWWCAVLTVITAGIGILLTGTVVENWYLWAIKHGVAPAYPEVVTAVDPYATATGVTQ.

The next 3 helical transmembrane spans lie at L53–V79, E111–L140, and S143–M168. (7R,8Z)-bacteriochlorophyll b contacts are provided by H182 and H202. Residues Y198 to V226 form a helical membrane-spanning segment. H219 and E234 together coordinate Fe cation. Residue W252 coordinates a ubiquinone. Residue H266 participates in Fe cation binding.

The protein belongs to the reaction center PufL/M/PsbA/D family. As to quaternary structure, reaction center is composed of four bacteriochlorophylls, two bacteriopheophytins, two ubiquinones, one iron, and two highly hydrophobic polypeptide chains (designated L and M).

Its subcellular location is the cellular chromatophore membrane. In terms of biological role, the reaction center is a membrane-bound complex that mediates the initial photochemical event in the electron transfer process of photosynthesis. In Allochromatium vinosum (strain ATCC 17899 / DSM 180 / NBRC 103801 / NCIMB 10441 / D) (Chromatium vinosum), this protein is Reaction center protein M chain (pufM).